A 709-amino-acid chain; its full sequence is ATP-dependent RNA helicase dbp7 (709 aa).

The tract at residues 13-90 (DNAQSRKPEA…KPAHELKGNK (78 aa)) is disordered. The segment covering 16 to 34 (QSRKPEALKSSRRWTDRAR) has biased composition (basic and acidic residues). Residues 44–65 (NESSKSTVKRNSGTNGASTDYK) are compositionally biased toward polar residues. The segment covering 66–90 (NSQKEKVINPVFDPRKPAHELKGNK) has biased composition (basic and acidic residues). The short motif at 138–167 (TNFAGVQLDTQLADHLNNKMNISAPTAIQS) is the Q motif element. A Helicase ATP-binding domain is found at 172–366 (ALLNTDDKDA…DSALKDALYL (195 aa)). An ATP-binding site is contributed by 185–192 (AQTGSGKT). The DEAD box signature appears at 301–304 (DEGD). Residues 404–580 (LLRSHVRSYK…EQPNGPSGLL (177 aa)) form the Helicase C-terminal domain. Residues 662–690 (GKISGANSSKPRKQGGSVDKGKSKSSKDI) are disordered.

Belongs to the DEAD box helicase family. DDX31/DBP7 subfamily.

It is found in the nucleus. The protein localises to the nucleolus. The catalysed reaction is ATP + H2O = ADP + phosphate + H(+). Functionally, ATP-binding RNA helicase involved in the biogenesis of 60S ribosomal subunits and is required for the normal formation of 25S and 5.8S rRNAs. This Schizosaccharomyces pombe (strain 972 / ATCC 24843) (Fission yeast) protein is ATP-dependent RNA helicase dbp7 (dbp7).